Consider the following 396-residue polypeptide: 1-deoxy-D-xylulose 5-phosphate reductoisomerase (396 aa).

NADPH-binding residues include Thr-10, Gly-11, Ser-12, Ile-13, and Asn-123. 1-deoxy-D-xylulose 5-phosphate is bound at residue Lys-124. NADPH is bound at residue Glu-125. Asp-149 is a Mn(2+) binding site. Ser-150, Glu-151, Ser-185, and His-208 together coordinate 1-deoxy-D-xylulose 5-phosphate. Position 151 (Glu-151) interacts with Mn(2+). Gly-214 serves as a coordination point for NADPH. Residues Ser-221, Asn-226, Lys-227, and Glu-230 each coordinate 1-deoxy-D-xylulose 5-phosphate. A Mn(2+)-binding site is contributed by Glu-230.

It belongs to the DXR family. Requires Mg(2+) as cofactor. Mn(2+) is required as a cofactor.

It catalyses the reaction 2-C-methyl-D-erythritol 4-phosphate + NADP(+) = 1-deoxy-D-xylulose 5-phosphate + NADPH + H(+). It participates in isoprenoid biosynthesis; isopentenyl diphosphate biosynthesis via DXP pathway; isopentenyl diphosphate from 1-deoxy-D-xylulose 5-phosphate: step 1/6. Its function is as follows. Catalyzes the NADPH-dependent rearrangement and reduction of 1-deoxy-D-xylulose-5-phosphate (DXP) to 2-C-methyl-D-erythritol 4-phosphate (MEP). The sequence is that of 1-deoxy-D-xylulose 5-phosphate reductoisomerase from Shewanella baltica (strain OS223).